Reading from the N-terminus, the 447-residue chain is Ribulose bisphosphate carboxylase large chain (447 aa).

Substrate is bound by residues Asn89 and Thr139. Lys141 acts as the Proton acceptor in catalysis. Lys143 lines the substrate pocket. 3 residues coordinate Mg(2+): Lys167, Asp169, and Glu170. Position 167 is an N6-carboxylysine (Lys167). Residue His260 is the Proton acceptor of the active site. The substrate site is built by Arg261, His293, and Ser345.

Belongs to the RuBisCO large chain family. Type I subfamily. As to quaternary structure, heterohexadecamer of 8 large chains and 8 small chains; disulfide-linked. The disulfide link is formed within the large subunit homodimers. The cofactor is Mg(2+). The disulfide bond which can form in the large chain dimeric partners within the hexadecamer appears to be associated with oxidative stress and protein turnover.

It is found in the plastid. The protein resides in the chloroplast. It catalyses the reaction 2 (2R)-3-phosphoglycerate + 2 H(+) = D-ribulose 1,5-bisphosphate + CO2 + H2O. It carries out the reaction D-ribulose 1,5-bisphosphate + O2 = 2-phosphoglycolate + (2R)-3-phosphoglycerate + 2 H(+). RuBisCO catalyzes two reactions: the carboxylation of D-ribulose 1,5-bisphosphate, the primary event in carbon dioxide fixation, as well as the oxidative fragmentation of the pentose substrate in the photorespiration process. Both reactions occur simultaneously and in competition at the same active site. This Convolvulus tricolor (Dwarf morning glory) protein is Ribulose bisphosphate carboxylase large chain.